The following is a 420-amino-acid chain: Bicoumarin synthase ktnC (420 aa).

A heme-binding site is contributed by C362.

The protein belongs to the cytochrome P450 family. It depends on heme as a cofactor.

It carries out the reaction 2 7-demethylsiderin + NADPH + O2 = orlandin + NADP(+) + 2 H2O. It functions in the pathway secondary metabolite biosynthesis. In terms of biological role, non-reducing polyketide synthase; part of the gene cluster that mediates the biosynthesis of the bicoumarin kotanin. The non-reducing polyketide synthase ktnS first catalyzes the formation of the pentaketidic 4,7-dihydroxy-5-methylcoumarin from acetyl coenzyme A and 4 malonyl coenzyme A molecules. Further O-methylation by ktnB leads to the formation of 7-demethylsiderin. Then, an oxidative phenol coupling catalyzed by the cytochrome P450 monooxygenase ktnC forms the 8,8'-dimer P-orlandin via dimerization the monomeric precursor, 7-demethylsiderin. P-orlandin is subsequently O-methylated in a stepwise fashion to demethylkotanin and kotanin. This chain is Bicoumarin synthase ktnC, found in Aspergillus niger (strain ATCC MYA-4892 / CBS 513.88 / FGSC A1513).